The primary structure comprises 138 residues: Superoxide dismutase [Mn] (138 aa).

Positions 2, 49, 133, and 137 each coordinate Mn(2+).

Belongs to the iron/manganese superoxide dismutase family. Mn(2+) is required as a cofactor.

The catalysed reaction is 2 superoxide + 2 H(+) = H2O2 + O2. Destroys superoxide anion radicals which are normally produced within the cells and which are toxic to biological systems. In Mycobacterium szulgai, this protein is Superoxide dismutase [Mn] (sodA).